We begin with the raw amino-acid sequence, 579 residues long: MTDWSRRRFLQTGAALGIAGTLPQTTTEVSAASPTLEKFVQPLPIPSVREPDGQRDGADAYEIAVTEFTQQLHPDLPETTVWGFDGSYPGPTIEADAGSPVHVRFDNSGLPSEHLFPVDDRLGGTTAENHPGYDGPVPEVRTVTHFHGLELDPANDGQSDMWTSPGGVEGPRFDSAWQELPMEQGRTTSTYHDHTLGITRLNAYAGLLGLYSITTDAERELGLPSGDYDIPLLLQDKEFNDDGSLHYPEEFVSAFLGDTAVVNGAVWPYVEVEPRRYRFRILNGANHRSFDLQLESESGSGVPTMYQFAPGHGFLESVVPIGPNGDLDSLLLTPFERGELVVDFSDHAGETLTLANGADMGPELTDLVEFRVSDPSTPPEDASADPTSLSLPTPASYDESDARVTREMTLGTEVRNGLITHTLNGHVFGDEDAPVYPQLGATEIWELQNESGGRHPIHLHLVTFRVIGRGPDGTQPPDPNELGPKDTVRVDPGERVRILVTFEGYTGQFPWHCHMLEHEDNKMMIPFVVENPVADYANEENVVDATGLTDAVGDWRNETLETEVLLEVIDQWRSGDEVA.

A signal peptide (tat-type signal) is located at residues 1-31 (MTDWSRRRFLQTGAALGIAGTLPQTTTEVSA). Positions 82–214 (WGFDGSYPGP…AGLLGLYSIT (133 aa)) constitute a Plastocyanin-like 1 domain. 4 residues coordinate Cu cation: His145, His147, His192, and His194. The disordered stretch occupies residues 372–401 (VSDPSTPPEDASADPTSLSLPTPASYDESD). A Plastocyanin-like 2 domain is found at 423-530 (LNGHVFGDED…NKMMIPFVVE (108 aa)). Asn449 carries N-linked (GlcNAc...) asparagine glycosylation. Cu cation contacts are provided by His455, His458, His460, His512, Cys513, His514, His518, and Met523. Asn557 carries N-linked (GlcNAc...) asparagine glycosylation.

This sequence belongs to the multicopper oxidase family. Cu(2+) serves as cofactor. Exported by the Tat system. In terms of processing, glycosylated.

It is found in the secreted. It carries out the reaction 4 hydroquinone + O2 = 4 benzosemiquinone + 2 H2O. Its activity is regulated as follows. Inhibited by 1 mM NaN(3), 10 mM thiourea, 10 mM 1,10-phenanthroline, 0.1 mM DL-dithiothreitol (DTT) and 1 mM L-cysteine. The inhibition by DTT and L-cysteine is likely caused by reduction of the oxidized substrate and not by inhibition of the enzyme. Functionally, catalyzes the oxidation of a wide variety of organic substrates, including bilirubin, syringaldazine (SGZ), 2,2'-azino-di-(3-ethylbenzothiazoline)-6-sulfonic acid (ABTS) and dimethoxyphenol (DMP). No oxidation of Fe(2+) or guaiacol. This Haloferax volcanii (strain ATCC 29605 / DSM 3757 / JCM 8879 / NBRC 14742 / NCIMB 2012 / VKM B-1768 / DS2) (Halobacterium volcanii) protein is Laccase (lccA).